Here is a 285-residue protein sequence, read N- to C-terminus: Stress response regulator protein 1 (285 aa).

Low complexity-rich tracts occupy residues 43-58 and 128-138; these read DTSS…SSNN and SIISSKSSNKS. Disordered regions lie at residues 43 to 66 and 114 to 142; these read DTSS…SDQQ and PLTP…TTVV. Residues 158–276 form the Response regulatory domain; the sequence is SFLIVDDNII…LDFMANSIDD (119 aa). The residue at position 209 (Asp-209) is a 4-aspartylphosphate.

Required for stress adaptation, morphogenesis and virulence. The chain is Stress response regulator protein 1 (SRR1) from Candida dubliniensis (strain CD36 / ATCC MYA-646 / CBS 7987 / NCPF 3949 / NRRL Y-17841) (Yeast).